Reading from the N-terminus, the 311-residue chain is D-allose-binding periplasmic protein (311 aa).

An N-terminal signal peptide occupies residues 1 to 23; sequence MNKYLKYFSGTLVGLMLSTSAFA.

The protein belongs to the bacterial solute-binding protein 2 family.

The protein localises to the periplasm. Its function is as follows. Part of the binding-protein-dependent transport system AlsBAC for D-allose. The polypeptide is D-allose-binding periplasmic protein (alsB) (Escherichia coli (strain K12)).